We begin with the raw amino-acid sequence, 516 residues long: Cytochrome P450 1A2 (516 aa).

The O-linked (GlcNAc) serine glycan is linked to S69. F226 lines the substrate pocket. Heme is bound at residue C458.

It belongs to the cytochrome P450 family. As to quaternary structure, interacts with PGRMC1; the interaction requires PGRMC1 homodimerization. Heme serves as cofactor.

It is found in the endoplasmic reticulum membrane. The protein resides in the microsome membrane. It catalyses the reaction an organic molecule + reduced [NADPH--hemoprotein reductase] + O2 = an alcohol + oxidized [NADPH--hemoprotein reductase] + H2O + H(+). It carries out the reaction 17beta-estradiol + reduced [NADPH--hemoprotein reductase] + O2 = 2-hydroxy-17beta-estradiol + oxidized [NADPH--hemoprotein reductase] + H2O + H(+). The catalysed reaction is 17beta-estradiol + reduced [NADPH--hemoprotein reductase] + O2 = 4-hydroxy-17beta-estradiol + oxidized [NADPH--hemoprotein reductase] + H2O + H(+). The enzyme catalyses estrone + reduced [NADPH--hemoprotein reductase] + O2 = 2-hydroxyestrone + oxidized [NADPH--hemoprotein reductase] + H2O + H(+). It catalyses the reaction estrone + reduced [NADPH--hemoprotein reductase] + O2 = 4-hydroxyestrone + oxidized [NADPH--hemoprotein reductase] + H2O + H(+). It carries out the reaction cholesterol + reduced [NADPH--hemoprotein reductase] + O2 = 25-hydroxycholesterol + oxidized [NADPH--hemoprotein reductase] + H2O + H(+). The catalysed reaction is all-trans-retinol + reduced [NADPH--hemoprotein reductase] + O2 = all-trans-retinal + oxidized [NADPH--hemoprotein reductase] + 2 H2O + H(+). The enzyme catalyses all-trans-retinal + reduced [NADPH--hemoprotein reductase] + O2 = all-trans-retinoate + oxidized [NADPH--hemoprotein reductase] + H2O + 2 H(+). It catalyses the reaction (5Z,8Z,11Z,14Z)-eicosatetraenoate + reduced [NADPH--hemoprotein reductase] + O2 = (14R,15S)-epoxy-(5Z,8Z,11Z)-eicosatrienoate + oxidized [NADPH--hemoprotein reductase] + H2O + H(+). It carries out the reaction (5Z,8Z,11Z,14Z)-eicosatetraenoate + reduced [NADPH--hemoprotein reductase] + O2 = (14S,15R)-epoxy-(5Z,8Z,11Z)-eicosatrienoate + oxidized [NADPH--hemoprotein reductase] + H2O + H(+). The catalysed reaction is (5Z,8Z,11Z,14Z,17Z)-eicosapentaenoate + reduced [NADPH--hemoprotein reductase] + O2 = (17R,18S)-epoxy-(5Z,8Z,11Z,14Z)-eicosatetraenoate + oxidized [NADPH--hemoprotein reductase] + H2O + H(+). The enzyme catalyses (4Z,7Z,10Z,13Z,16Z,19Z)-docosahexaenoate + reduced [NADPH--hemoprotein reductase] + O2 = (19R,20S)-epoxy-(4Z,7Z,10Z,13Z,16Z)-docosapentaenoate + oxidized [NADPH--hemoprotein reductase] + H2O + H(+). It catalyses the reaction (5S)-hydroperoxy-(6E,8Z,11Z,14Z)-eicosatetraenoate = 5-oxo-(6E,8Z,11Z,14Z)-eicosatetraenoate + H2O. It carries out the reaction (12S)-hydroperoxy-(5Z,8Z,10E,14Z)-eicosatetraenoate = 12-oxo-(5Z,8Z,10E,14Z)-eicosatetraenoate + H2O. The catalysed reaction is (15S)-hydroperoxy-(5Z,8Z,11Z,13E)-eicosatetraenoate = 15-oxo-(5Z,8Z,11Z,13E)-eicosatetraenoate + H2O. The enzyme catalyses (13S)-hydroperoxy-(9Z,11E)-octadecadienoate = 13-oxo-(9Z,11E)-octadecadienoate + H2O. It catalyses the reaction (5Z,8Z,11Z,14Z)-eicosatetraenoate + reduced [NADPH--hemoprotein reductase] + O2 = 13-hydroxy-(5Z,8Z,11Z,14Z)-eicosatetraenoate + oxidized [NADPH--hemoprotein reductase] + H2O + H(+). It carries out the reaction (5Z,8Z,11Z,14Z)-eicosatetraenoate + reduced [NADPH--hemoprotein reductase] + O2 = 19-hydroxy-(5Z,8Z,11Z,14Z)-eicosatetraenoate + oxidized [NADPH--hemoprotein reductase] + H2O + H(+). The catalysed reaction is (9Z,12Z)-octadecadienoate + reduced [NADPH--hemoprotein reductase] + O2 = 11-hydroxy-(9Z,12Z)-octadecadienoate + oxidized [NADPH--hemoprotein reductase] + H2O + H(+). It functions in the pathway cofactor metabolism; retinol metabolism. The protein operates within steroid metabolism; cholesterol metabolism. It participates in lipid metabolism; arachidonate metabolism. Its function is as follows. A cytochrome P450 monooxygenase involved in the metabolism of various endogenous substrates, including fatty acids, steroid hormones and vitamins. Mechanistically, uses molecular oxygen inserting one oxygen atom into a substrate, and reducing the second into a water molecule, with two electrons provided by NADPH via cytochrome P450 reductase (NADPH--hemoprotein reductase). Catalyzes the hydroxylation of carbon-hydrogen bonds. Exhibits high catalytic activity for the formation of hydroxyestrogens from estrone (E1) and 17beta-estradiol (E2), namely 2-hydroxy E1 and E2. Metabolizes cholesterol toward 25-hydroxycholesterol, a physiological regulator of cellular cholesterol homeostasis. May act as a major enzyme for all-trans retinoic acid biosynthesis in the liver. Catalyzes two successive oxidative transformation of all-trans retinol to all-trans retinal and then to the active form all-trans retinoic acid. Primarily catalyzes stereoselective epoxidation of the last double bond of polyunsaturated fatty acids (PUFA), displaying a strong preference for the (R,S) stereoisomer. Catalyzes bisallylic hydroxylation and omega-1 hydroxylation of PUFA. May also participate in eicosanoids metabolism by converting hydroperoxide species into oxo metabolites (lipoxygenase-like reaction, NADPH-independent). Plays a role in the oxidative metabolism of xenobiotics. Catalyzes the N-hydroxylation of heterocyclic amines and the O-deethylation of phenacetin. Metabolizes caffeine via N3-demethylation. In Macaca fuscata fuscata (Japanese macaque), this protein is Cytochrome P450 1A2 (CYP1A2).